The primary structure comprises 370 residues: Phosphoserine aminotransferase (370 aa).

Position 1 is an N-acetylmethionine (Met-1). O-phospho-L-serine-binding residues include His-44 and Arg-45. Lys-51 is modified (N6-acetyllysine). Pyridoxal 5'-phosphate is bound by residues Gly-79, Cys-80, and Trp-107. Lys-127 carries the N6-acetyllysine modification. The pyridoxal 5'-phosphate site is built by Thr-156, Asp-176, and Gln-199. An N6-(pyridoxal phosphate)lysine modification is found at Lys-200. Pyridoxal 5'-phosphate contacts are provided by Asn-241 and Thr-242. N6-acetyllysine is present on residues Lys-269, Lys-318, and Lys-323. Phosphoserine is present on Ser-331. Lys-333 is modified (N6-acetyllysine). The O-phospho-L-serine site is built by His-335, Arg-336, and Arg-342.

The protein belongs to the class-V pyridoxal-phosphate-dependent aminotransferase family. SerC subfamily. In terms of assembly, homodimer. Pyridoxal 5'-phosphate is required as a cofactor. As to expression, expressed at high levels in the brain, liver, kidney and pancreas, and very weakly expressed in the thymus, prostate, testis and colon.

The catalysed reaction is O-phospho-L-serine + 2-oxoglutarate = 3-phosphooxypyruvate + L-glutamate. It participates in amino-acid biosynthesis; L-serine biosynthesis; L-serine from 3-phospho-D-glycerate: step 2/3. Its activity is regulated as follows. Phosphoserine transaminase activity is strongly stimulated by increasing the ionic strength. Involved in L-serine biosynthesis via the phosphorylated pathway, a three-step pathway converting the glycolytic intermediate 3-phospho-D-glycerate into L-serine. Catalyzes the second step, that is the pyridoxal 5'-phosphate-dependent transamination of 3-phosphohydroxypyruvate and L-glutamate to O-phosphoserine (OPS) and alpha-ketoglutarate. The protein is Phosphoserine aminotransferase of Homo sapiens (Human).